The chain runs to 175 residues: Methylated-DNA--protein-cysteine methyltransferase (175 aa).

C142 acts as the Nucleophile; methyl group acceptor in catalysis.

This sequence belongs to the MGMT family.

It is found in the cytoplasm. It carries out the reaction a 6-O-methyl-2'-deoxyguanosine in DNA + L-cysteinyl-[protein] = S-methyl-L-cysteinyl-[protein] + a 2'-deoxyguanosine in DNA. The enzyme catalyses a 4-O-methyl-thymidine in DNA + L-cysteinyl-[protein] = a thymidine in DNA + S-methyl-L-cysteinyl-[protein]. In terms of biological role, involved in the cellular defense against the biological effects of O6-methylguanine (O6-MeG) and O4-methylthymine (O4-MeT) in DNA. Repairs the methylated nucleobase in DNA by stoichiometrically transferring the methyl group to a cysteine residue in the enzyme. This is a suicide reaction: the enzyme is irreversibly inactivated. This is Methylated-DNA--protein-cysteine methyltransferase from Thermococcus sibiricus (strain DSM 12597 / MM 739).